An 825-amino-acid polypeptide reads, in one-letter code: Glycerol-3-phosphate acyltransferase 1, mitochondrial (825 aa).

Residues 1–87 (MDESALTLGT…FFNPSIPSLG (87 aa)) are Cytoplasmic-facing. An important for mitochondrial localization region spans residues 80 to 120 (NPSIPSLGLRNVIYINETHTRHRGWLARRLSYVLFIQERDV). An intramembrane segment occupies 88-118 (LRNVIYINETHTRHRGWLARRLSYVLFIQER). Topologically, residues 119-825 (DVHKGMFATN…LEYILSLVVL (707 aa)) are cytoplasmic. The HXXXXD motif signature appears at 230-235 (HRSHID). CoA-binding residues include Arg278, Arg279, Lys288, Arg293, and Arg328. Ser380 bears the Phosphoserine mark. Positions 435 to 455 (SRPSGAADEGTDMSINESRNA) are disordered. Arg461 contacts CoA. A phosphoserine mark is found at Ser685 and Ser692. N6-acetyllysine is present on residues Lys777 and Lys781.

This sequence belongs to the GPAT/DAPAT family. In terms of tissue distribution, highly expressed in adipose tissues and lung. Low expression in liver.

It is found in the mitochondrion outer membrane. The enzyme catalyses sn-glycerol 3-phosphate + an acyl-CoA = a 1-acyl-sn-glycero-3-phosphate + CoA. It catalyses the reaction (9Z,12Z)-octadecadienoyl-CoA + sn-glycerol 3-phosphate = 1-(9Z,12Z)-octadecadienoyl-sn-glycero-3-phosphate + CoA. It carries out the reaction sn-glycerol 3-phosphate + (9Z)-octadecenoyl-CoA = 1-(9Z-octadecenoyl)-sn-glycero-3-phosphate + CoA. The catalysed reaction is sn-glycerol 3-phosphate + octadecanoyl-CoA = 1-octadecanoyl-sn-glycero-3-phosphate + CoA. The enzyme catalyses sn-glycerol 3-phosphate + hexadecanoyl-CoA = 1-hexadecanoyl-sn-glycero-3-phosphate + CoA. It catalyses the reaction dodecanoyl-CoA + sn-glycerol 3-phosphate = 1-dodecanoyl-sn-glycerol 3-phosphate + CoA. It carries out the reaction 1-acyl-sn-glycero-3-phospho-(1'-sn-glycerol) + an acyl-CoA = a 1,2-diacyl-sn-glycero-3-phospho-(1'-sn-glycerol) + CoA. It functions in the pathway phospholipid metabolism; CDP-diacylglycerol biosynthesis; CDP-diacylglycerol from sn-glycerol 3-phosphate: step 1/3. Its function is as follows. Mitochondrial membrane protein that catalyzes the essential first step of biosynthesis of glycerolipids such as triglycerides, phosphatidic acids and lysophosphatidic acids. Esterifies acyl-group from acyl-coenzyme A (acyl-CoA) to the sn-1 position of glycerol-3-phosphate, to produce lysophosphatidic acid. Has a narrow hydrophobic binding cleft that selects for a linear acyl chain. Catalytic activity is higher for substrates with a 16-carbon acyl chain. This chain is Glycerol-3-phosphate acyltransferase 1, mitochondrial, found in Bos taurus (Bovine).